Here is a 96-residue protein sequence, read N- to C-terminus: Co-chaperonin GroES (96 aa).

The protein belongs to the GroES chaperonin family. Heptamer of 7 subunits arranged in a ring. Interacts with the chaperonin GroEL.

The protein localises to the cytoplasm. In terms of biological role, together with the chaperonin GroEL, plays an essential role in assisting protein folding. The GroEL-GroES system forms a nano-cage that allows encapsulation of the non-native substrate proteins and provides a physical environment optimized to promote and accelerate protein folding. GroES binds to the apical surface of the GroEL ring, thereby capping the opening of the GroEL channel. The protein is Co-chaperonin GroES of Ralstonia nicotianae (strain ATCC BAA-1114 / GMI1000) (Ralstonia solanacearum).